The sequence spans 693 residues: tRNA (guanine(27)-N(2))-dimethyltransferase (693 aa).

The short motif at 95–99 (HKLRR) is the Nucleolar localization signal element. Residues 144 to 166 (YHCIICSATITRRTDMLGHVRRH) form a C2H2-type zinc finger. The 462-residue stretch at 187–648 (EILKEADTDV…APLMQFKSIL (462 aa)) folds into the Trm1 methyltransferase domain. Positions 220, 267, 317, and 318 each coordinate S-adenosyl-L-methionine. Zn(2+)-binding residues include Cys-448, Cys-451, Cys-473, and Cys-475. Residue Lys-545 forms a Glycyl lysine isopeptide (Lys-Gly) (interchain with G-Cter in SUMO2) linkage. Ser-572 and Ser-667 each carry phosphoserine.

The protein belongs to the class I-like SAM-binding methyltransferase superfamily. Trm1 family.

It localises to the nucleus. Its subcellular location is the nucleolus. The catalysed reaction is guanosine(27) in tRNA(Tyr) + 2 S-adenosyl-L-methionine = N(2)-dimethylguanosine(27) in tRNA(Tyr) + 2 S-adenosyl-L-homocysteine + 2 H(+). Functionally, specifically dimethylates a single guanine residue at position 27 of tRNA(Tyr) using S-adenosyl-L-methionine as donor of the methyl groups. Dimethylation at position 27 of tRNA(Tyr) is required for efficient translation of tyrosine codons. Also required to maintain 3-(3-amino-3-carboxypropyl)uridine (acp3U) in the D-loop of several cytoplasmic tRNAs. This chain is tRNA (guanine(27)-N(2))-dimethyltransferase (TRMT1L), found in Macaca fascicularis (Crab-eating macaque).